Here is a 173-residue protein sequence, read N- to C-terminus: Ribulose bisphosphate carboxylase small subunit, chloroplastic 1 (173 aa).

The N-terminal 49 residues, 1 to 49 (MASIPATVATVAQANMVAPFTGLKANAAFPVTKKVNDFSTLPSNGGRVQ), are a transit peptide targeting the chloroplast.

The protein belongs to the RuBisCO small chain family. In terms of assembly, heterohexadecamer of 8 large and 8 small subunits.

The protein localises to the plastid. Its subcellular location is the chloroplast. RuBisCO catalyzes two reactions: the carboxylation of D-ribulose 1,5-bisphosphate, the primary event in carbon dioxide fixation, as well as the oxidative fragmentation of the pentose substrate. Both reactions occur simultaneously and in competition at the same active site. Although the small subunit is not catalytic it is essential for maximal activity. This chain is Ribulose bisphosphate carboxylase small subunit, chloroplastic 1, found in Flaveria pringlei.